Here is a 374-residue protein sequence, read N- to C-terminus: Quinolinate synthase (374 aa).

His-53 and Ser-70 together coordinate iminosuccinate. Cys-116 contacts [4Fe-4S] cluster. Residues 148–150 (YMN) and Ser-169 each bind iminosuccinate. Cys-236 provides a ligand contact to [4Fe-4S] cluster. Iminosuccinate is bound by residues 262 to 264 (HPE) and Thr-279. Residue Cys-327 participates in [4Fe-4S] cluster binding.

It belongs to the quinolinate synthase family. Type 3 subfamily. The cofactor is [4Fe-4S] cluster.

The protein localises to the cytoplasm. It carries out the reaction iminosuccinate + dihydroxyacetone phosphate = quinolinate + phosphate + 2 H2O + H(+). It participates in cofactor biosynthesis; NAD(+) biosynthesis; quinolinate from iminoaspartate: step 1/1. Catalyzes the condensation of iminoaspartate with dihydroxyacetone phosphate to form quinolinate. The protein is Quinolinate synthase of Halobacterium salinarum (strain ATCC 29341 / DSM 671 / R1).